A 129-amino-acid chain; its full sequence is MARPKRVGKKKEKKSIPVGVAHIQATFNNTIITFTDTRGNTVSWASAGQSGFKGSRKSTPFAAQIAADQAARRAQENGMRTVGIFVKGPGSGRESAMRAINAAGFKVAFIRDITPIPHNGCRPPKRRRV.

This sequence belongs to the universal ribosomal protein uS11 family. In terms of assembly, part of the 30S ribosomal subunit. Interacts with proteins S7 and S18. Binds to IF-3.

Functionally, located on the platform of the 30S subunit, it bridges several disparate RNA helices of the 16S rRNA. Forms part of the Shine-Dalgarno cleft in the 70S ribosome. This is Small ribosomal subunit protein uS11 from Oleidesulfovibrio alaskensis (strain ATCC BAA-1058 / DSM 17464 / G20) (Desulfovibrio alaskensis).